A 342-amino-acid polypeptide reads, in one-letter code: Isopentenyl-diphosphate delta-isomerase (342 aa).

11–12 (RK) contributes to the substrate binding site. Residues S68, 69–71 (SMT), S99, and N127 each bind FMN. 99–101 (SMR) contributes to the substrate binding site. Q162 is a substrate binding site. E163 serves as a coordination point for Mg(2+). FMN-binding positions include K194, T224, 274 to 276 (GLK), and 295 to 296 (AG).

This sequence belongs to the IPP isomerase type 2 family. In terms of assembly, homooctamer. Dimer of tetramers. The cofactor is FMN. NADPH is required as a cofactor. It depends on Mg(2+) as a cofactor.

Its subcellular location is the cytoplasm. The enzyme catalyses isopentenyl diphosphate = dimethylallyl diphosphate. Functionally, involved in the biosynthesis of isoprenoids. Catalyzes the 1,3-allylic rearrangement of the homoallylic substrate isopentenyl (IPP) to its allylic isomer, dimethylallyl diphosphate (DMAPP). In Rickettsia canadensis (strain McKiel), this protein is Isopentenyl-diphosphate delta-isomerase.